The sequence spans 379 residues: Spermatogenesis-associated protein 17 (379 aa).

IQ domains follow at residues Glu48–Ile77, Leu71–Tyr100, and Tyr107–Tyr136.

As to expression, strongly expressed in adult testis but weakly expressed in the spleen and thymus. Strongly expressed in round and elongating spermatids, and weakly or not expressed in spermatozoa.

It localises to the cytoplasm. This Mus musculus (Mouse) protein is Spermatogenesis-associated protein 17 (Spata17).